A 156-amino-acid chain; its full sequence is Ribosome maturation factor RimP (156 aa).

This sequence belongs to the RimP family.

The protein localises to the cytoplasm. In terms of biological role, required for maturation of 30S ribosomal subunits. This chain is Ribosome maturation factor RimP, found in Lachnospira eligens (strain ATCC 27750 / DSM 3376 / VPI C15-48 / C15-B4) (Eubacterium eligens).